A 325-amino-acid chain; its full sequence is Peroxidase 47 (325 aa).

Positions 1–36 (MLTRFKKQNNKMVRANIVSMVLLMHAIVGFPFHARG) are cleaved as a signal peptide. 4 disulfides stabilise this stretch: cysteine 46–cysteine 125, cysteine 79–cysteine 84, cysteine 131–cysteine 321, and cysteine 209–cysteine 235. The active-site Proton acceptor is histidine 77. Ca(2+) contacts are provided by aspartate 78, glycine 83, aspartate 85, and serine 87. Proline 172 provides a ligand contact to substrate. N-linked (GlcNAc...) asparagine glycosylation occurs at asparagine 177. Histidine 202 is a binding site for heme b. Threonine 203 contributes to the Ca(2+) binding site. Ca(2+)-binding residues include aspartate 246, threonine 248, and aspartate 253.

It belongs to the peroxidase family. Classical plant (class III) peroxidase subfamily. The cofactor is heme b. Ca(2+) serves as cofactor.

The protein localises to the secreted. It catalyses the reaction 2 a phenolic donor + H2O2 = 2 a phenolic radical donor + 2 H2O. Its function is as follows. Removal of H(2)O(2), oxidation of toxic reductants, biosynthesis and degradation of lignin, suberization, auxin catabolism, response to environmental stresses such as wounding, pathogen attack and oxidative stress. These functions might be dependent on each isozyme/isoform in each plant tissue. The polypeptide is Peroxidase 47 (PER47) (Arabidopsis thaliana (Mouse-ear cress)).